Consider the following 62-residue polypeptide: Beta-defensin 33 (62 aa).

The signal sequence occupies residues 1-20 (MRLLFLLFILLVCLAQTTSG). 3 disulfide bridges follow: Cys30–Cys59, Cys37–Cys52, and Cys45–Cys60.

It belongs to the beta-defensin family.

The protein resides in the secreted. Functionally, has antibacterial activity. The chain is Beta-defensin 33 (Defb33) from Mus musculus (Mouse).